Consider the following 210-residue polypeptide: Thymidylate kinase (210 aa).

16 to 23 is a binding site for ATP; that stretch reads GGDGVGKS.

The protein belongs to the thymidylate kinase family.

The catalysed reaction is dTMP + ATP = dTDP + ADP. Phosphorylation of dTMP to form dTDP in both de novo and salvage pathways of dTTP synthesis. The protein is Thymidylate kinase of Leifsonia xyli subsp. xyli (strain CTCB07).